We begin with the raw amino-acid sequence, 616 residues long: Zinc metalloproteinase-disintegrin-like ecarin (616 aa).

The signal sequence occupies residues 1 to 20; sequence MIQILLVIICLAVFPYQGCS. Positions 21–190 are excised as a propeptide; that stretch reads IILGSGNVND…EPIKKTLGLI (170 aa). The region spanning 201–397 is the Peptidase M12B domain; sequence KFIELVVVVD…YNPKCILDPP (197 aa). Residue Glu204 participates in Ca(2+) binding. N-linked (GlcNAc...) asparagine glycans are attached at residues Asn219 and Asn261. Asp288 is a Ca(2+) binding site. N-linked (GlcNAc...) asparagine glycans are attached at residues Asn295 and Asn326. 3 disulfide bridges follow: Cys312/Cys392, Cys352/Cys376, and Cys354/Cys359. Residue His337 participates in Zn(2+) binding. The active site involves Glu338. Zn(2+)-binding residues include His341 and His347. Residues Cys392, Val407, Asn410, Ile412, Glu414, Glu417, and Asp420 each contribute to the Ca(2+) site. The region spanning 405–491 is the Disintegrin domain; that stretch reads PAVCGNEIWE…ECPRNEFQRN (87 aa). Cystine bridges form between Cys408–Cys437, Cys419–Cys432, Cys421–Cys427, Cys431–Cys454, Cys445–Cys451, Cys450–Cys476, Cys463–Cys483, Cys470–Cys502, Cys495–Cys507, Cys514–Cys567, Cys529–Cys578, Cys542–Cys555, Cys562–Cys604, and Cys598–Cys609. The D/ECD-tripeptide signature appears at 469–471; sequence DCD. Residues Asp471, Val472, and Asn486 each coordinate Ca(2+). A glycan (N-linked (GlcNAc...) asparagine) is linked at Asn497.

It belongs to the venom metalloproteinase (M12B) family. P-III subfamily. P-IIIa sub-subfamily. Monomer. Zn(2+) is required as a cofactor. Expressed by the venom gland.

It is found in the secreted. Its function is as follows. Snake venom zinc metalloproteinase that catalyzes the conversion of prothrombin (F2) to alpha-thrombin through formation of a thrombin intermediate, thereby functioning as a procoagulant protein. Has a low Km for prothrombin and a high kcat. Cleaves the 320-Arg-Ile-321 bond in prothrombin and produces meizothrombin which is ultimately converted to alpha-thrombin by autolysis. The chain is Zinc metalloproteinase-disintegrin-like ecarin from Echis carinatus (Saw-scaled viper).